A 151-amino-acid chain; its full sequence is MADESNTGPVAAAVAADAEVKVPTAKKLRSPRPQKAAAEPAQPKAPAAKPRRYSEQERNDKLKLIETQVSEGNTLKNAIQSAGISEQTYYHWKGAAKPVGKKDAKSTKPLPAGDEFADLVKLEEENQKLRKRLAEKLRTENAELRKRLGLD.

Positions 1-61 (MADESNTGPV…RYSEQERNDK (61 aa)) are disordered. The span at 33 to 48 (PQKAAAEPAQPKAPAA) shows a compositional bias: low complexity. Positions 52-61 (RYSEQERNDK) are enriched in basic and acidic residues.

Belongs to the SyrB family.

Its function is as follows. Responsible for the repression of SyrM activity. The polypeptide is Transcriptional regulator SyrB (syrB) (Rhizobium meliloti (strain 1021) (Ensifer meliloti)).